The following is a 468-amino-acid chain: Adenosylhomocysteinase (468 aa).

Substrate-binding residues include Thr-57, Asp-132, and Glu-194. 195–197 (TTT) lines the NAD(+) pocket. Lys-224 and Asp-228 together coordinate substrate. NAD(+)-binding positions include Asn-229, 258-263 (GFGDVG), Glu-281, Asn-316, 337-339 (IGH), and Asn-382.

This sequence belongs to the adenosylhomocysteinase family. NAD(+) is required as a cofactor.

The protein localises to the cytoplasm. The enzyme catalyses S-adenosyl-L-homocysteine + H2O = L-homocysteine + adenosine. Its pathway is amino-acid biosynthesis; L-homocysteine biosynthesis; L-homocysteine from S-adenosyl-L-homocysteine: step 1/1. May play a key role in the regulation of the intracellular concentration of adenosylhomocysteine. In Methylorubrum populi (strain ATCC BAA-705 / NCIMB 13946 / BJ001) (Methylobacterium populi), this protein is Adenosylhomocysteinase.